Reading from the N-terminus, the 201-residue chain is Histone-like protein HC2 (201 aa).

The disordered stretch occupies residues 1–69 (MLGVQKKCST…VAKKATAKKA (69 aa)). 2 stretches are compositionally biased toward basic residues: residues 8-50 (CSTR…KTVA) and 59-69 (PVAKKATAKKA).

Belongs to the histone H1/H5 family. HCT subfamily.

Functionally, might have a role in establishing the nucleoid structure of elementary bodies. The chain is Histone-like protein HC2 (hctB) from Chlamydia trachomatis serovar D (strain ATCC VR-885 / DSM 19411 / UW-3/Cx).